The chain runs to 540 residues: Probable quinate permease (540 aa).

The Cytoplasmic segment spans residues 1–22 (MSILALVEDRPTPKEVYNWRIY). Residues 23–43 (LLAAVASFTSCMIGYDSAFIG) form a helical membrane-spanning segment. At 44–74 (TTLALGSFREEFEFTTMEPAAVNRVSANIVS) the chain is on the extracellular side. Residues 75 to 95 (CYQAGAFFGAFFAYPIGHFWG) traverse the membrane as a helical segment. Residues 96-97 (RK) lie on the Cytoplasmic side of the membrane. The helical transmembrane segment at 98–118 (WGLLSAAAIFTLGAGLMLGAN) threads the bilayer. The Extracellular segment spans residues 119–130 (GDRGLGLIYGGR). The chain crosses the membrane as a helical span at residues 131 to 151 (VLAGIGVGAGSNITPIYISEL). Topologically, residues 152 to 157 (APPSIR) are cytoplasmic. A helical membrane pass occupies residues 158–178 (GHLVGVYELGWQIGGLVGFWI). The Extracellular portion of the chain corresponds to 179 to 193 (NYGVSETLAPSHKQW). Residues 194–214 (IIPFAVQLIPSGLLLIGAVFL) form a helical membrane-spanning segment. The Cytoplasmic portion of the chain corresponds to 215–285 (RESPRWLFSS…AGTNKKVMYR (71 aa)). A helical membrane pass occupies residues 286-306 (LFLGSMLFFWQNGSGINAINY). The Extracellular portion of the chain corresponds to 307-325 (YSPTVFKSIGLRGTNTGMF). The helical transmembrane segment at 326–346 (STGIFGVVKTVVTFIWLLYLI) threads the bilayer. At 347-352 (DRMGRR) the chain is on the cytoplasmic side. The chain crosses the membrane as a helical span at residues 353–373 (LLLLVGAAGASVCLWIVGAYI). Residues 374–387 (KIANPAKNGNGEMT) are Extracellular-facing. Residues 388–408 (GGGIAAMFFFYLYTVFYTPSW) traverse the membrane as a helical segment. Residues 409–456 (NGTPWVMNSEMFEPNMRSLAQACAAASNWLWNFLISRFTPQMFDKMGY) lie on the Cytoplasmic side of the membrane. The helical transmembrane segment at 457–477 (GVWFFFASLMLCSIVIVFFLI) threads the bilayer. Topologically, residues 478–540 (PETKGIPLES…RLESVQPKEA (63 aa)) are extracellular. The segment at 519-540 (IEESGYTKSGEQRLESVQPKEA) is disordered. Over residues 528–540 (GEQRLESVQPKEA) the composition is skewed to basic and acidic residues.

Belongs to the major facilitator superfamily. Sugar transporter (TC 2.A.1.1) family. Interacts with creB. In terms of processing, ubiquitinated. Deubiquitinated by creB, probably to control its activity or amount.

It localises to the cell membrane. Functionally, integral membrane transporter that imports quinic acid to be catabolized as a carbon source. This Aspergillus clavatus (strain ATCC 1007 / CBS 513.65 / DSM 816 / NCTC 3887 / NRRL 1 / QM 1276 / 107) protein is Probable quinate permease (qutD).